The following is a 555-amino-acid chain: Glucose-6-phosphate isomerase (555 aa).

Glu-353 serves as the catalytic Proton donor. Active-site residues include His-384 and Lys-516.

It belongs to the GPI family.

It localises to the cytoplasm. It catalyses the reaction alpha-D-glucose 6-phosphate = beta-D-fructose 6-phosphate. It participates in carbohydrate biosynthesis; gluconeogenesis. It functions in the pathway carbohydrate degradation; glycolysis; D-glyceraldehyde 3-phosphate and glycerone phosphate from D-glucose: step 2/4. Its function is as follows. Catalyzes the reversible isomerization of glucose-6-phosphate to fructose-6-phosphate. The chain is Glucose-6-phosphate isomerase from Methylobacillus flagellatus (strain ATCC 51484 / DSM 6875 / VKM B-1610 / KT).